A 357-amino-acid polypeptide reads, in one-letter code: Peptide chain release factor 1 (357 aa).

At Gln-235 the chain carries N5-methylglutamine. The interval 285–305 is disordered; it reads KRHNEASAMRSAQVGSGDRSE.

Belongs to the prokaryotic/mitochondrial release factor family. Methylated by PrmC. Methylation increases the termination efficiency of RF1.

It is found in the cytoplasm. In terms of biological role, peptide chain release factor 1 directs the termination of translation in response to the peptide chain termination codons UAG and UAA. The polypeptide is Peptide chain release factor 1 (prfA) (Chlamydia pneumoniae (Chlamydophila pneumoniae)).